The following is a 321-amino-acid chain: Lactamase-like protein notP (321 aa).

Histidine 108, histidine 110, aspartate 112, and histidine 113 together coordinate Zn(2+). The active-site Proton donor/acceptor is aspartate 112.

Belongs to the metallo-beta-lactamase superfamily. Zn(2+) is required as a cofactor.

Its function is as follows. Lactamase-like protein; part of the gene cluster that mediates the biosynthesis of notoamide, a fungal indole alkaloid that belongs to a family of natural products containing a characteristic bicyclo[2.2.2]diazaoctane core. The first step of notoamide biosynthesis involves coupling of L-proline and L-tryptophan by the bimodular NRPS notE, to produce cyclo-L-tryptophan-L-proline called brevianamide F. The reverse prenyltransferase notF then acts as a deoxybrevianamide E synthase and converts brevianamide F to deoxybrevianamide E via reverse prenylation at C-2 of the indole ring leading to the bicyclo[2.2.2]diazaoctane core. Deoxybrevianamide E is further hydroxylated at C-6 of the indole ring, likely catalyzed by the cytochrome P450 monooxygenase notG, to yield 6-hydroxy-deoxybrevianamide E. 6-hydroxy-deoxybrevianamide E is a specific substrate of the prenyltransferase notC for normal prenylation at C-7 to produce 6-hydroxy-7-prenyl-deoxybrevianamide, also called notoamide S. As the proposed pivotal branching point in notoamide biosynthesis, notoamide S can be diverted to notoamide E through an oxidative pyran ring closure putatively catalyzed by either notH cytochrome P450 monooxygenase or the notD FAD-linked oxidoreductase. This step would be followed by an indole 2,3-epoxidation-initiated pinacol-like rearrangement catalyzed by the notB FAD-dependent monooxygenase leading to the formation of notoamide C and notoamide D. On the other hand notoamide S is converted to notoamide T by notH (or notD), a bifunctional oxidase that also functions as the intramolecular Diels-Alderase responsible for generation of (+)-notoamide T. To generate antipodal (-)-notoaminide T, notH' (or notD') in Aspergillus versicolor is expected to catalyze a Diels-Alder reaction leading to the opposite stereochemistry. The remaining oxidoreductase notD (or notH) likely catalyzes the oxidative pyran ring formation to yield (+)-stephacidin A. The FAD-dependent monooxygenase notI is highly similar to notB and is predicted to catalyze a similar conversion from (+)-stephacidin A to (-)-notoamide B via the 2,3-epoxidation of (+)-stephacidin A followed by a pinacol-type rearrangement. Finally, it remains unclear which enzyme could be responsible for the final hydroxylation steps leading to notoamide A and sclerotiamide. The function of notP in the notoamide biosynthesis has not been determined yet. The polypeptide is Lactamase-like protein notP (Aspergillus sp. (strain MF297-2)).